The following is a 358-amino-acid chain: Trace amine-associated receptor 7d (358 aa).

The Extracellular portion of the chain corresponds to 1–47; that stretch reads MATGDDSFPWDQDSILSRDLFSATSTELCYENLNRSCVRSPYSPGPR. An N-linked (GlcNAc...) asparagine glycan is attached at Asn34. 2 disulfide bridges follow: Cys37/Cys201 and Cys120/Cys205. Residues 48–68 traverse the membrane as a helical segment; that stretch reads LILYAVFGFGAVLAVCGNLLV. Topologically, residues 69 to 83 are cytoplasmic; the sequence is MTSILHFRQLHSPAN. The helical transmembrane segment at 84–104 threads the bilayer; it reads FLVASLACADFLVGVMVMPFS. At 105 to 121 the chain is on the extracellular side; the sequence is MVRSVEGCWYFGESYCK. The helical transmembrane segment at 122-143 threads the bilayer; sequence FHSCFEGSFCYSSLFHLCFISV. Topologically, residues 144 to 166 are cytoplasmic; that stretch reads DRYIAVSDPLTYPTRFTASVSGK. The chain crosses the membrane as a helical span at residues 167 to 187; the sequence is CITFSWLLSIIYSFSLLYTGA. The Extracellular portion of the chain corresponds to 188-212; that stretch reads NDAGLEDLVSALTCVGGCQIAVNQT. Asn210 carries an N-linked (GlcNAc...) asparagine glycan. Residues 213 to 233 traverse the membrane as a helical segment; it reads WVFINFLLFLIPTLVMITVYS. Topologically, residues 234-274 are cytoplasmic; sequence KIFLIAKQQAQNIEKMSKQTARASESYKDRVTKRERKAAKT. Residues 275–295 form a helical membrane-spanning segment; that stretch reads LGIAVAAFLLSWLPYFIDSII. Topologically, residues 296 to 309 are extracellular; it reads DAFLGFITPTYVYE. Residues 310–333 form a helical membrane-spanning segment; that stretch reads ILVWIVYYNSAMNPLIYAFFYSWF. Residues 334–358 lie on the Cytoplasmic side of the membrane; sequence RKAIKLIVSGKILRENSSTTNLFPE.

It belongs to the G-protein coupled receptor 1 family. Specifically expressed in neurons of the olfactory epithelium.

The protein resides in the cell membrane. In terms of biological role, olfactory receptor specific for trace amines, such as beta-phenylethylamine (beta-PEA). Trace amine compounds are enriched in animal body fluids and act on trace amine-associated receptors (TAARs) to elicit both intraspecific and interspecific innate behaviors. Ligand-binding causes a conformation change that triggers signaling via G(s)-class of G alpha proteins (GNAL or GNAS). This is Trace amine-associated receptor 7d from Mus musculus (Mouse).